Consider the following 341-residue polypeptide: Cysteine-rich repeat secretory protein 1 (341 aa).

The N-terminal stretch at 1–25 (MFSLPLHQSKLIFLLSFLLIKTLNA) is a signal peptide. 2 Gnk2-homologous domains span residues 28–131 (TYLL…SRKI) and 136–245 (DQGP…ATFL). 4 cysteine pairs are disulfide-bonded: Cys85–Cys94, Cys97–Cys122, Cys199–Cys208, and Cys211–Cys236. The span at 247–262 (PPPPPPPPPPPPPPPQ) shows a compositional bias: pro residues. Residues 247-274 (PPPPPPPPPPPPPPPQRLYGENDTPSSD) form a disordered region.

This sequence belongs to the cysteine-rich repeat secretory protein family.

The protein resides in the secreted. The polypeptide is Cysteine-rich repeat secretory protein 1 (CRRSP1) (Arabidopsis thaliana (Mouse-ear cress)).